The sequence spans 398 residues: Glycosyltransferase GlyF (398 aa).

The GT8 domain stretch occupies residues 1–259 (MRKSIVLAAD…SEIAFQRSDL (259 aa)). Residues 8–13 (AADNAY) and 101–102 (DS) each bind UDP. The Mn(2+) site is built by Asp-101, Asp-103, and His-221. Residue 221–227 (HYASHDK) participates in UDP binding.

It in the N-terminal section; belongs to the glycosyltransferase 8 family.

Its function is as follows. May be involved in the polymorphic O-glycosylation of the serine-rich repeat protein PsrP. Has hydrolytic activity against UDP-galactose and to a lesser extent against UDP-glucose; no glycosyltransferase activity has been seen with tested substrates. The chain is Glycosyltransferase GlyF from Streptococcus pneumoniae serotype 4 (strain ATCC BAA-334 / TIGR4).